Consider the following 312-residue polypeptide: Very-long-chain 3-oxoacyl-CoA reductase (312 aa).

Residues 4 to 24 (ALPAAGFLYWVGAGTVAYLAL) traverse the membrane as a helical segment. 50–79 (GEWAVVTGGTDGIGKSYAEELAKRGMKVVL) contributes to the NADP(+) binding site. A run of 2 helical transmembrane segments spans residues 182 to 202 (GAIL…LTIY) and 271 to 291 (GYLI…WIYL). A substrate-binding site is contributed by S189. Y202 (proton acceptor) is an active-site residue. A Di-lysine motif motif is present at residues 308-312 (KIKKN).

It belongs to the short-chain dehydrogenases/reductases (SDR) family. 17-beta-HSD 3 subfamily.

The protein resides in the endoplasmic reticulum membrane. The enzyme catalyses a very-long-chain (3R)-3-hydroxyacyl-CoA + NADP(+) = a very-long-chain 3-oxoacyl-CoA + NADPH + H(+). The catalysed reaction is 17beta-estradiol + NAD(+) = estrone + NADH + H(+). It catalyses the reaction 17beta-estradiol + NADP(+) = estrone + NADPH + H(+). It carries out the reaction 3-oxooctadecanoyl-CoA + NADPH + H(+) = (3R)-hydroxyoctadecanoyl-CoA + NADP(+). The enzyme catalyses (7Z,10Z,13Z,16Z)-3-oxodocosatetraenoyl-CoA + NADPH + H(+) = (3R)-hydroxy-(7Z,10Z,13Z,16Z)-docosatetraenoyl-CoA + NADP(+). The catalysed reaction is 3-oxo-(7Z,10Z,13Z,16Z,19Z)-docosapentaenoyl-CoA + NADPH + H(+) = (3R)-hydroxy-(7Z,10Z,13Z,16Z,19Z)-docosapentaenoyl-CoA + NADP(+). It catalyses the reaction (8Z,11Z,14Z)-3-oxoeicosatrienoyl-CoA + NADPH + H(+) = (3R)-hydroxy-(8Z,11Z,14Z)-eicosatrienoyl-CoA + NADP(+). It participates in lipid metabolism; fatty acid biosynthesis. It functions in the pathway steroid biosynthesis; estrogen biosynthesis. In terms of biological role, catalyzes the second of the four reactions of the long-chain fatty acids elongation cycle. This endoplasmic reticulum-bound enzymatic process, allows the addition of two carbons to the chain of long- and very long-chain fatty acids/VLCFAs per cycle. This enzyme has a 3-ketoacyl-CoA reductase activity, reducing 3-ketoacyl-CoA to 3-hydroxyacyl-CoA, within each cycle of fatty acid elongation. Thereby, it may participate in the production of VLCFAs of different chain lengths that are involved in multiple biological processes as precursors of membrane lipids and lipid mediators. May also catalyze the transformation of estrone (E1) into estradiol (E2) and play a role in estrogen formation. The polypeptide is Very-long-chain 3-oxoacyl-CoA reductase (HSD17B12) (Macaca fascicularis (Crab-eating macaque)).